The chain runs to 458 residues: ATP synthase subunit beta (458 aa).

An ATP-binding site is contributed by 148–155; it reads GGAGVGKT.

Belongs to the ATPase alpha/beta chains family. As to quaternary structure, F-type ATPases have 2 components, CF(1) - the catalytic core - and CF(0) - the membrane proton channel. CF(1) has five subunits: alpha(3), beta(3), gamma(1), delta(1), epsilon(1). CF(0) has three main subunits: a(1), b(2) and c(9-12). The alpha and beta chains form an alternating ring which encloses part of the gamma chain. CF(1) is attached to CF(0) by a central stalk formed by the gamma and epsilon chains, while a peripheral stalk is formed by the delta and b chains.

It is found in the cell inner membrane. It carries out the reaction ATP + H2O + 4 H(+)(in) = ADP + phosphate + 5 H(+)(out). In terms of biological role, produces ATP from ADP in the presence of a proton gradient across the membrane. The catalytic sites are hosted primarily by the beta subunits. The polypeptide is ATP synthase subunit beta (Francisella tularensis subsp. tularensis (strain FSC 198)).